Reading from the N-terminus, the 536-residue chain is Feruloyl esterase B (536 aa).

The first 20 residues, 1–20, serve as a signal peptide directing secretion; it reads MKTSIVLSIVALFLTSKASA. In terms of domain architecture, CBM10 spans 21-59; that stretch reads DCWSERLGWPCCSDSNAEVIYVDDDGDWGVENNDWCGIQ. The tract at residues 22–59 is cellulose-binding; the sequence is CWSERLGWPCCSDSNAEVIYVDDDGDWGVENNDWCGIQ. N-linked (GlcNAc...) asparagine glycosylation occurs at Asn65. Tandem repeats lie at residues 78 to 90, 91 to 103, 104 to 116, 117 to 129, 134 to 146, 151 to 163, 164 to 176, 181 to 193, 194 to 206, 211 to 223, 224 to 236, and 237 to 249. The 12 X 13 AA repeats of N-Q-G-G-G-M-[PQ]-W-G-D-F-G-G stretch occupies residues 78-249; sequence NQGGGMPWGD…GGMQWGDFGG (172 aa). A compositionally biased stretch (gly residues) spans 203–252; it reads DFGGNQGGNQGGGMPWGDFGGNQGGGMQWGDFGGNQGGGMQWGDFGGNQG. The interval 203–273 is disordered; the sequence is DFGGNQGGNQ…SGPTVEYSTD (71 aa). The catalytic stretch occupies residues 257–536; the sequence is WGNQGGNSGP…WDFVKQFSLP (280 aa).

In terms of assembly, component of the multienzyme cellulase-hemicellulase complex.

It localises to the secreted. It carries out the reaction feruloyl-polysaccharide + H2O = ferulate + polysaccharide.. Inhibited by the specific serine esterase inhibitor AEBSF. Functionally, involved in degradation of plant cell walls. Hydrolyzes of the feruloyl-arabinose ester bond in arabinoxylans as well as the feruloyl-galactose and feruloyl-arabinose ester bonds in pectin. This chain is Feruloyl esterase B (ESTA), found in Piromyces equi.